The following is a 246-amino-acid chain: Peroxisomal membrane protein 11A (246 aa).

Residues 1–93 are Cytoplasmic-facing; it reads MDAFIRVANQ…LCLTLANLNR (93 aa). A helical transmembrane segment spans residues 94-114; it reads VVYYICDTVLWAKSVGLTSGV. At 115 to 217 the chain is on the lumenal side; that stretch reads NREKWQRWAA…LNQLGIYKSN (103 aa). Residues 218 to 238 traverse the membrane as a helical segment; sequence LGVVGLGGLISSLAGLLTVVY. The segment at 218 to 238 is required for homodimerization, interaction with PEX11G, and peroxisomal localization; sequence LGVVGLGGLISSLAGLLTVVY. At 239-246 the chain is on the cytoplasmic side; sequence PQLKLKAR.

Belongs to the peroxin-11 family. Homodimer. Heterodimer with PEX11G. Probably interacts with COPB2 and COPA. Interacts with PEX19. Interacts with FIS1. Strongly expressed in liver and at lower levels in heart, brain, kidney and testis.

The protein localises to the peroxisome membrane. Its function is as follows. May be involved in peroxisomal proliferation and may regulate peroxisomes division. May mediate binding of coatomer proteins to the peroxisomal membrane. Promotes membrane protrusion and elongation on the peroxisomal surface. The polypeptide is Peroxisomal membrane protein 11A (Pex11a) (Mus musculus (Mouse)).